Here is a 645-residue protein sequence, read N- to C-terminus: 1,4-alpha-glucan branching enzyme GlgB (645 aa).

Catalysis depends on Asp-309, which acts as the Nucleophile. Glu-352 functions as the Proton donor in the catalytic mechanism. Residues 619 to 645 (VKTRKGSKKQDGSKTKVRSNVTSRGKR) are disordered. Residues 636 to 645 (RSNVTSRGKR) show a composition bias toward polar residues.

This sequence belongs to the glycosyl hydrolase 13 family. GlgB subfamily. As to quaternary structure, monomer.

It carries out the reaction Transfers a segment of a (1-&gt;4)-alpha-D-glucan chain to a primary hydroxy group in a similar glucan chain.. Its pathway is glycan biosynthesis; glycogen biosynthesis. Functionally, catalyzes the formation of the alpha-1,6-glucosidic linkages in glycogen by scission of a 1,4-alpha-linked oligosaccharide from growing alpha-1,4-glucan chains and the subsequent attachment of the oligosaccharide to the alpha-1,6 position. The chain is 1,4-alpha-glucan branching enzyme GlgB from Bacillus cereus (strain Q1).